A 473-amino-acid polypeptide reads, in one-letter code: Photosystem II CP43 reaction center protein (473 aa).

Residues 1-14 constitute a propeptide that is removed on maturation; that stretch reads MKILYSLRRFYHVE. An N-acetylthreonine modification is found at threonine 15. At threonine 15 the chain carries Phosphothreonine. The next 5 helical transmembrane spans lie at 69–93, 134–155, 178–200, 255–275, and 291–312; these read LFEVAHFVPEKPMYEQGLILLPHLA, LLGPETLEESFPFFGYVWKDRN, KALYFGGIYDTWAPGGGDVRKIT, KPFAWARRAFVWSGEAYLSYS, and WFNNTAYPSEFYGPTGPEASQA. Residue glutamate 367 coordinates [CaMn4O5] cluster. Residues 447–471 traverse the membrane as a helical segment; that stretch reads RARAAAAGFEKGIDRDLEPVLYMTP.

The protein belongs to the PsbB/PsbC family. PsbC subfamily. In terms of assembly, PSII is composed of 1 copy each of membrane proteins PsbA, PsbB, PsbC, PsbD, PsbE, PsbF, PsbH, PsbI, PsbJ, PsbK, PsbL, PsbM, PsbT, PsbX, PsbY, PsbZ, Psb30/Ycf12, at least 3 peripheral proteins of the oxygen-evolving complex and a large number of cofactors. It forms dimeric complexes. Requires Binds multiple chlorophylls and provides some of the ligands for the Ca-4Mn-5O cluster of the oxygen-evolving complex. It may also provide a ligand for a Cl- that is required for oxygen evolution. PSII binds additional chlorophylls, carotenoids and specific lipids. as cofactor.

Its subcellular location is the plastid. The protein resides in the chloroplast thylakoid membrane. Functionally, one of the components of the core complex of photosystem II (PSII). It binds chlorophyll and helps catalyze the primary light-induced photochemical processes of PSII. PSII is a light-driven water:plastoquinone oxidoreductase, using light energy to abstract electrons from H(2)O, generating O(2) and a proton gradient subsequently used for ATP formation. In Oryza nivara (Indian wild rice), this protein is Photosystem II CP43 reaction center protein.